The following is a 491-amino-acid chain: Myocilin (491 aa).

Residues 1–18 (MPAVQLLLLACPVWDVGA) form the signal peptide. N-linked (GlcNAc...) asparagine glycosylation occurs at Asn-43. Residues 98–171 (QETPEGLQRE…QEVARLRRGQ (74 aa)) are a coiled coil. Residues 151–189 (ENLARRLESSSQEVARLRRGQCPQTRDTARDVPPGSREV) form a disordered region. The Olfactomedin-like domain occupies 231–490 (GCGELVWVGE…MVTYDIKLSK (260 aa)). Cys-232 and Cys-420 form a disulfide bridge. 5 residues coordinate Ca(2+): Asp-367, Asn-415, Ala-416, Ile-464, and Asp-465.

As to quaternary structure, homodimer (via N-terminus). Can also form higher oligomers. Interacts with OLFM3, FN1, NRCAM, GLDN and NFASC. Interacts (via N-terminus) with MYL2. Interacts with SFRP1, FRZB, FZD7, FZD10, FZD1 and WIF1; regulates Wnt signaling. Interacts with SNTA1; regulates muscle hypertrophy. Interacts with ERBB2 and ERBB3; activates ERBB2-ERBB3 signaling pathway. Interacts with SNCG; affects its secretion and its aggregation. Palmitoylated. Post-translationally, undergoes a calcium-dependent proteolytic cleavage at Arg-213 by CAPN2 in the endoplasmic reticulum. The result is the production of two fragments, one of 35 kDa containing the C-terminal olfactomedin-like domain, and another of 20 kDa containing the N-terminal leucine zipper-like domain. In terms of processing, glycosylated.

It is found in the secreted. The protein localises to the golgi apparatus. The protein resides in the cytoplasmic vesicle. It localises to the extracellular space. Its subcellular location is the extracellular matrix. It is found in the extracellular exosome. The protein localises to the mitochondrion. The protein resides in the mitochondrion intermembrane space. It localises to the mitochondrion inner membrane. Its subcellular location is the mitochondrion outer membrane. It is found in the rough endoplasmic reticulum. The protein localises to the cell projection. The protein resides in the cilium. It localises to the endoplasmic reticulum. In terms of biological role, secreted glycoprotein regulating the activation of different signaling pathways in adjacent cells to control different processes including cell adhesion, cell-matrix adhesion, cytoskeleton organization and cell migration. Promotes substrate adhesion, spreading and formation of focal contacts. Negatively regulates cell-matrix adhesion and stress fiber assembly through Rho protein signal transduction. Modulates the organization of actin cytoskeleton by stimulating the formation of stress fibers through interactions with components of Wnt signaling pathways. Promotes cell migration through activation of PTK2 and the downstream phosphatidylinositol 3-kinase signaling. Plays a role in bone formation and promotes osteoblast differentiation in a dose-dependent manner through mitogen-activated protein kinase signaling. Mediates myelination in the peripheral nervous system through ERBB2/ERBB3 signaling. Plays a role as a regulator of muscle hypertrophy through the components of dystrophin-associated protein complex. Involved in positive regulation of mitochondrial depolarization. Plays a role in neurite outgrowth. May participate in the obstruction of fluid outflow in the trabecular meshwork. The sequence is that of Myocilin (MYOC) from Macaca fascicularis (Crab-eating macaque).